Consider the following 174-residue polypeptide: Eukaryotic translation elongation factor 1 epsilon-1 (174 aa).

Position 2 is an N-acetylalanine (alanine 2). The interval 2 to 56 (AAAAELSLLEKSLGLSKGNKYSAQGERQIPVLQTNNGPSLTGLTTIAAHLVKQAN) is N-terminal. In terms of domain architecture, GST C-terminal spans 50 to 173 (HLVKQANKEY…FIKNRLYTNS (124 aa)). The interval 57-63 (KEYLLGS) is linker. Residues 64 to 152 (TAEEKAIVQQ…SRWFCHIQHY (89 aa)) are C-terminal. Lysine 138 is modified (N6-acetyllysine). A coiled-coil region spans residues 153–169 (PGIRQHLSSVVFIKNRL).

Part of a multisubunit complex that groups tRNA ligases for Arg (RARS1), Asp (DARS1), Gln (QARS1), Ile (IARS1), Leu (LARS1), Lys (KARS1), Met (MARS1) the bifunctional ligase for Glu and Pro (EPRS1) and the auxiliary subunits AIMP1/p43, AIMP2/p38 and EEF1E1/p18. Can interact simultaneously with MARS1 and EPRS1. Forms a linear complex that contains MARS1, EEF1E1, EPRS1 and AIMP2 that is at the core of the multisubunit complex. Interacts with ATM and ATR. The interaction with ATM, which takes place independently of TP53, is induced by DNA damage that may occur during genotoxic stress or cell growth. The interaction with ATR is enhanced by UV irradiation. As to expression, down-regulated in various cancer tissues.

Its subcellular location is the cytoplasm. The protein localises to the cytosol. It localises to the nucleus. In terms of biological role, positive modulator of ATM response to DNA damage. The sequence is that of Eukaryotic translation elongation factor 1 epsilon-1 (EEF1E1) from Homo sapiens (Human).